The sequence spans 593 residues: MGEALRGLKRTIMCGESRENNIGEKVTVMGWVQRKRNLGGLIFVDLRDRTGIMQIVFGEEINKEAFEKSDNVKSEYCIAVTGEIVKRQSPNNDMETGAVELKGEDIKILSESETPPIYIKEGLDASENIRLKYRYLDLRRPDMQKIFMIRHKTCKVVRDFLDENGFLEMETPILTKSTPEGARDYLVPSRNYKGMFYALPQSPQIFKQLLMVSGYDKYFQITKCFRDEDLRANRQPEFTQIDMELSFVEEDDVIELNERLLAKVFKEVGGIDVKLPIERMPYKIAMEKYGSDKPDLRFGMEINDLTEAVKNSEFKVFKGAIEAGGSVRAIKAENCATMGRKQIDKLQDFVKTYKAKGLAWIAYKEDEIKSPIAKFLTEEEMKAILEKMDAKAGDLILIVADKNNVVFESLGALRLHIAKELDIINKNEFRFVWITEFPLLAYNEEEGRYQAEHHPFTAIMDEDIELLDTEPGKVRAKAYDIVLNGEELGGGSIRIHDSKLQEKMFSVLGFTKEKAWERFGFLLEAFKFGPPPHGGLAYGLDRMIMFLAGTENIKDVITFPKNQNAFCPLTEAPNVVDENQLEELGIKKIEKED.

Position 180 (Glu180) interacts with L-aspartate. Positions 204–207 are aspartate; that stretch reads QIFK. Residue Arg226 coordinates L-aspartate. ATP is bound by residues 226–228 and Gln235; that span reads RDE. His453 contacts L-aspartate. Glu487 serves as a coordination point for ATP. An L-aspartate-binding site is contributed by Arg494. 539–542 is an ATP binding site; it reads GLDR.

It belongs to the class-II aminoacyl-tRNA synthetase family. Type 1 subfamily. In terms of assembly, homodimer.

It localises to the cytoplasm. The catalysed reaction is tRNA(Asp) + L-aspartate + ATP = L-aspartyl-tRNA(Asp) + AMP + diphosphate. Its function is as follows. Catalyzes the attachment of L-aspartate to tRNA(Asp) in a two-step reaction: L-aspartate is first activated by ATP to form Asp-AMP and then transferred to the acceptor end of tRNA(Asp). This is Aspartate--tRNA ligase from Clostridium botulinum (strain Okra / Type B1).